The primary structure comprises 104 residues: PLAT domain-containing protein 3 (104 aa).

A PLAT domain is found at Met-1–Leu-104.

This is PLAT domain-containing protein 3 from Arabidopsis thaliana (Mouse-ear cress).